A 170-amino-acid polypeptide reads, in one-letter code: RNA pyrophosphohydrolase (170 aa).

The 144-residue stretch at 6–149 folds into the Nudix hydrolase domain; sequence GFRPNVGIVI…KRDVYRRALK (144 aa). The short motif at 38–59 is the Nudix box element; that stretch reads GGIDDGETPEQAMYRELYEEVG.

It belongs to the Nudix hydrolase family. RppH subfamily. It depends on a divalent metal cation as a cofactor.

Functionally, accelerates the degradation of transcripts by removing pyrophosphate from the 5'-end of triphosphorylated RNA, leading to a more labile monophosphorylated state that can stimulate subsequent ribonuclease cleavage. This Aliivibrio salmonicida (strain LFI1238) (Vibrio salmonicida (strain LFI1238)) protein is RNA pyrophosphohydrolase.